We begin with the raw amino-acid sequence, 618 residues long: Acetolactate synthase (618 aa).

Residues 1–30 (MSAPTKPHSPTFKPEPHSAANEPKHPAARP) form a disordered region. Thiamine diphosphate is bound at residue E85. FAD contacts are provided by residues R187, 293–314 (HGTV…LGTR), and 336–355 (DIDP…IVGD). Positions 429–509 (QHQMWAAQFI…VKVALINNGN (81 aa)) are thiamine pyrophosphate binding. Residues D480 and N507 each coordinate Mg(2+).

The protein belongs to the TPP enzyme family. Mg(2+) serves as cofactor. It depends on thiamine diphosphate as a cofactor.

The catalysed reaction is 2 pyruvate + H(+) = (2S)-2-acetolactate + CO2. It functions in the pathway amino-acid biosynthesis; L-isoleucine biosynthesis; L-isoleucine from 2-oxobutanoate: step 1/4. Its pathway is amino-acid biosynthesis; L-valine biosynthesis; L-valine from pyruvate: step 1/4. The chain is Acetolactate synthase (ilvB) from Mycobacterium bovis (strain ATCC BAA-935 / AF2122/97).